Reading from the N-terminus, the 274-residue chain is Ubiquinone biosynthesis protein COQ4 homolog, mitochondrial (274 aa).

A mitochondrion-targeting transit peptide spans 1–20 (MLRQTAFRSMKLNRTPGRYF). Residues 13-40 (NRTPGRYFTTAENMDTGSSQSPPDTEQK) form a disordered region. Positions 22-36 (TAENMDTGSSQSPPD) are enriched in polar residues. Positions 177, 178, 181, and 193 each coordinate Zn(2+).

Belongs to the COQ4 family. Component of a multi-subunit COQ enzyme complex. It depends on Zn(2+) as a cofactor.

It localises to the mitochondrion inner membrane. It carries out the reaction a 4-hydroxy-3-methoxy-5-(all-trans-polyprenyl)benzoate + H(+) = a 2-methoxy-6-(all-trans-polyprenyl)phenol + CO2. The protein operates within cofactor biosynthesis; ubiquinone biosynthesis. In terms of biological role, lyase that catalyzes the C1-decarboxylation of 4-hydroxy-3-methoxy-5-(all-trans-polyprenyl)benzoic acid into 2-methoxy-6-(all-trans-polyprenyl)phenol during ubiquinone biosynthesis. The protein is Ubiquinone biosynthesis protein COQ4 homolog, mitochondrial of Aedes aegypti (Yellowfever mosquito).